A 4621-amino-acid chain; its full sequence is Dynein axonemal heavy chain 5 (4621 aa).

Positions 1–1938 (MFRIGRRQLW…MIHITDVAFI (1938 aa)) are stem. Coiled coils occupy residues 260–305 (WIKQ…DQLK) and 803–825 (LENA…DLIE). Residues 901-921 (VCHENASPSGNTSGRREGHSE) form a disordered region. Coiled-coil stretches lie at residues 1065–1094 (AVKN…SINL) and 1433–1462 (DVNI…DWQA). 4 AAA regions span residues 1939 to 2161 (YQNE…VLRT), 2221 to 2440 (TAIS…IQNL), 2547 to 2800 (VYPP…IWQG), and 2913 to 3167 (LYNE…FRRS). Residues 1977 to 1984 (GPAGTGKT) and 2259 to 2266 (GPSGSGKT) each bind ATP. Residues 3182-3479 (YKFIYEEKHM…QTLLEDADRC (298 aa)) are stalk. Coiled coils occupy residues 3186-3299 (YEEK…QTIK), 3423-3490 (LKAN…STLI), and 3729-3814 (ILTE…EEYR). AAA regions lie at residues 3564-3794 (LIDA…EVTQ) and 4009-4223 (ARKY…FIQN). Residues 4389-4417 (FLRQEIDRMQRVLSLVRSTLTELKLAVDG) adopt a coiled-coil conformation.

Belongs to the dynein heavy chain family. Interacts with DNAL1. Consists of at least two heavy chains and a number of intermediate and light chains. As to expression, strongly expressed in lung and kidney and weaker expression seen in brain, heart and testis. In the brain, expressed in ependymal cells lining the brain ventricles and the aqueduct.

It is found in the cytoplasm. The protein localises to the cytoskeleton. The protein resides in the cilium axoneme. In terms of biological role, force generating protein of respiratory cilia. Produces force towards the minus ends of microtubules. Dynein has ATPase activity; the force-producing power stroke is thought to occur on release of ADP. Required for structural and functional integrity of the cilia of ependymal cells lining the brain ventricles. The sequence is that of Dynein axonemal heavy chain 5 from Mus musculus (Mouse).